The primary structure comprises 175 residues: uncharacterized protein (175 aa).

This is an uncharacterized protein from Acanthamoeba polyphaga mimivirus (APMV).